Reading from the N-terminus, the 394-residue chain is Flap endonuclease 1-A (394 aa).

Residues 1–105 (MGIKGLTKLI…RELAKRFARR (105 aa)) are N-domain. Position 34 (Asp34) interacts with Mg(2+). Arg71 lines the DNA pocket. Mg(2+) contacts are provided by Asp87, Glu159, Glu161, Asp180, and Asp182. Residues 123 to 254 (DVEKYSKKTV…QTALKMIRQH (132 aa)) are I-domain. Glu159 contributes to the DNA binding site. Gly232 and Asp234 together coordinate DNA. Asp234 is a binding site for Mg(2+). The interval 338 to 346 (SQGRLESFF) is interaction with PCNA. Positions 343–394 (ESFFGVSSSSSNKRKEAPDSEASAGKQVKTAAAVKPAKAASKKGPAKGGKKK) are disordered. Over residues 368–381 (KQVKTAAAVKPAKA) the composition is skewed to low complexity. The segment covering 382–394 (ASKKGPAKGGKKK) has biased composition (basic residues).

This sequence belongs to the XPG/RAD2 endonuclease family. FEN1 subfamily. As to quaternary structure, interacts with PCNA. Three molecules of FEN1 bind to one PCNA trimer with each molecule binding to one PCNA monomer. PCNA stimulates the nuclease activity without altering cleavage specificity. The cofactor is Mg(2+). Post-translationally, phosphorylated. Phosphorylation upon DNA damage induces relocalization to the nuclear plasma.

It is found in the nucleus. The protein localises to the nucleolus. It localises to the nucleoplasm. Its subcellular location is the mitochondrion. Structure-specific nuclease with 5'-flap endonuclease and 5'-3' exonuclease activities involved in DNA replication and repair. During DNA replication, cleaves the 5'-overhanging flap structure that is generated by displacement synthesis when DNA polymerase encounters the 5'-end of a downstream Okazaki fragment. It enters the flap from the 5'-end and then tracks to cleave the flap base, leaving a nick for ligation. Also involved in the long patch base excision repair (LP-BER) pathway, by cleaving within the apurinic/apyrimidinic (AP) site-terminated flap. Acts as a genome stabilization factor that prevents flaps from equilibrating into structures that lead to duplications and deletions. Also possesses 5'-3' exonuclease activity on nicked or gapped double-stranded DNA, and exhibits RNase H activity. Also involved in replication and repair of rDNA and in repairing mitochondrial DNA. This Physcomitrium patens (Spreading-leaved earth moss) protein is Flap endonuclease 1-A.